The primary structure comprises 77 residues: Dermaseptin-B9 (77 aa).

The N-terminal stretch at 1–22 (MAFLKKSLFLVLFLGLVSLSVC) is a signal peptide. Propeptides lie at residues 23–43 (EEEK…QSEE) and 76–77 (EQ).

It belongs to the frog skin active peptide (FSAP) family. Dermaseptin subfamily. In terms of tissue distribution, expressed by the skin glands.

The protein resides in the secreted. Has antimicrobial activity. Exhibits a bactericidal activity towards several species of mollicutes, firmicutes and gracilicutes. This peptide is membranotropic and it efficiently depolarizes the plasma membrane. The chain is Dermaseptin-B9 (DRG3) from Phyllomedusa bicolor (Two-colored leaf frog).